The sequence spans 147 residues: Hemoglobin subunit delta (147 aa).

In terms of domain architecture, Globin spans Asn-3–His-147. 2 residues coordinate heme b: His-64 and His-93.

This sequence belongs to the globin family. In terms of assembly, heterotetramer of two delta chains and two alpha chains. Red blood cells.

This is Hemoglobin subunit delta (HBD) from Elephas maximus (Indian elephant).